Here is a 347-residue protein sequence, read N- to C-terminus: Glycerol-3-phosphate dehydrogenase [NAD(P)+] (347 aa).

NADPH-binding residues include Trp20, Arg39, and Lys118. The sn-glycerol 3-phosphate site is built by Lys118, Gly152, and Ser154. Residue Ala156 participates in NADPH binding. Sn-glycerol 3-phosphate contacts are provided by Lys207, Asp260, Ser270, Arg271, and Asn272. The active-site Proton acceptor is the Lys207. Position 271 (Arg271) interacts with NADPH. Positions 295 and 297 each coordinate NADPH.

It belongs to the NAD-dependent glycerol-3-phosphate dehydrogenase family.

It is found in the cytoplasm. It catalyses the reaction sn-glycerol 3-phosphate + NAD(+) = dihydroxyacetone phosphate + NADH + H(+). The catalysed reaction is sn-glycerol 3-phosphate + NADP(+) = dihydroxyacetone phosphate + NADPH + H(+). Its pathway is membrane lipid metabolism; glycerophospholipid metabolism. Catalyzes the reduction of the glycolytic intermediate dihydroxyacetone phosphate (DHAP) to sn-glycerol 3-phosphate (G3P), the key precursor for phospholipid synthesis. The chain is Glycerol-3-phosphate dehydrogenase [NAD(P)+] from Cupriavidus pinatubonensis (strain JMP 134 / LMG 1197) (Cupriavidus necator (strain JMP 134)).